The primary structure comprises 240 residues: Epoxyqueuosine reductase QueH (240 aa).

[4Fe-4S] cluster contacts are provided by Cys-43, Cys-44, Cys-129, and Cys-132. Cysteines 211 and 213 form a disulfide.

The protein belongs to the QueH family.

It catalyses the reaction epoxyqueuosine(34) in tRNA + AH2 = queuosine(34) in tRNA + A + H2O. Its pathway is tRNA modification; tRNA-queuosine biosynthesis. Its function is as follows. Catalyzes the conversion of epoxyqueuosine (oQ) to queuosine (Q), which is a hypermodified base found in the wobble positions of tRNA(Asp), tRNA(Asn), tRNA(His) and tRNA(Tyr). This chain is Epoxyqueuosine reductase QueH, found in Staphylococcus aureus (strain Mu50 / ATCC 700699).